A 141-amino-acid polypeptide reads, in one-letter code: Holo-[acyl-carrier-protein] synthase (141 aa).

2 residues coordinate Mg(2+): Asp8 and Glu61.

The protein belongs to the P-Pant transferase superfamily. AcpS family. Mg(2+) serves as cofactor.

It localises to the cytoplasm. It carries out the reaction apo-[ACP] + CoA = holo-[ACP] + adenosine 3',5'-bisphosphate + H(+). In terms of biological role, transfers the 4'-phosphopantetheine moiety from coenzyme A to a Ser of acyl-carrier-protein. The polypeptide is Holo-[acyl-carrier-protein] synthase (Rhodopseudomonas palustris (strain HaA2)).